Reading from the N-terminus, the 157-residue chain is Ribosomal RNA large subunit methyltransferase H (157 aa).

S-adenosyl-L-methionine is bound by residues leucine 73, glycine 105, and 124 to 129 (MSKMTF).

It belongs to the RNA methyltransferase RlmH family. As to quaternary structure, homodimer.

It localises to the cytoplasm. It catalyses the reaction pseudouridine(1915) in 23S rRNA + S-adenosyl-L-methionine = N(3)-methylpseudouridine(1915) in 23S rRNA + S-adenosyl-L-homocysteine + H(+). Its function is as follows. Specifically methylates the pseudouridine at position 1915 (m3Psi1915) in 23S rRNA. This chain is Ribosomal RNA large subunit methyltransferase H, found in Bacteroides fragilis (strain ATCC 25285 / DSM 2151 / CCUG 4856 / JCM 11019 / LMG 10263 / NCTC 9343 / Onslow / VPI 2553 / EN-2).